The sequence spans 223 residues: Putative archaetidylserine decarboxylase proenzyme (223 aa).

The Schiff-base intermediate with substrate; via pyruvic acid role is filled by S183. Pyruvic acid (Ser); by autocatalysis is present on S183.

Belongs to the phosphatidylserine decarboxylase family. PSD-A subfamily. As to quaternary structure, heterodimer of a large membrane-associated beta subunit and a small pyruvoyl-containing alpha subunit. It depends on pyruvate as a cofactor. In terms of processing, is synthesized initially as an inactive proenzyme. Formation of the active enzyme involves a self-maturation process in which the active site pyruvoyl group is generated from an internal serine residue via an autocatalytic post-translational modification. Two non-identical subunits are generated from the proenzyme in this reaction, and the pyruvate is formed at the N-terminus of the alpha chain, which is derived from the carboxyl end of the proenzyme. The post-translation cleavage follows an unusual pathway, termed non-hydrolytic serinolysis, in which the side chain hydroxyl group of the serine supplies its oxygen atom to form the C-terminus of the beta chain, while the remainder of the serine residue undergoes an oxidative deamination to produce ammonia and the pyruvoyl prosthetic group on the alpha chain.

It localises to the cell membrane. It carries out the reaction archaetidylserine + H(+) = archaetidylethanolamine + CO2. Functionally, catalyzes the formation of archaetidylethanolamine (PtdEtn) from archaetidylserine (PtdSer). This Methanothermobacter thermautotrophicus (strain ATCC 29096 / DSM 1053 / JCM 10044 / NBRC 100330 / Delta H) (Methanobacterium thermoautotrophicum) protein is Putative archaetidylserine decarboxylase proenzyme.